Here is a 33-residue protein sequence, read N- to C-terminus: Photosystem II reaction center protein Psb30 (33 aa).

A helical membrane pass occupies residues 5 to 25; it reads IVAQLTVLALIVVSGPLVIAL.

The protein belongs to the Psb30/Ycf12 family. PSII is composed of 1 copy each of membrane proteins PsbA, PsbB, PsbC, PsbD, PsbE, PsbF, PsbH, PsbI, PsbJ, PsbK, PsbL, PsbM, PsbT, PsbX, PsbY, PsbZ, Psb30/Ycf12, peripheral proteins of the oxygen-evolving complex and a large number of cofactors. It forms dimeric complexes.

Its subcellular location is the plastid. It localises to the chloroplast thylakoid membrane. Functionally, a core subunit of photosystem II (PSII), probably helps stabilize the reaction center. In Angiopteris evecta (Mule's foot fern), this protein is Photosystem II reaction center protein Psb30.